The primary structure comprises 41 residues: Photosystem II reaction center protein L (41 aa).

The helical transmembrane segment at 20–40 (LFLGLLLVFVLGILSPATSLT) threads the bilayer.

Belongs to the PsbL family. As to quaternary structure, PSII is composed of 1 copy each of membrane proteins PsbA, PsbB, PsbC, PsbD, PsbE, PsbF, PsbH, PsbI, PsbJ, PsbK, PsbL, PsbM, PsbT, PsbX, PsbY, PsbZ, Psb30/Ycf12, peripheral proteins PsbO, CyanoQ (PsbQ), PsbU, PsbV and a large number of cofactors. It forms dimeric complexes.

It is found in the cellular thylakoid membrane. One of the components of the core complex of photosystem II (PSII). PSII is a light-driven water:plastoquinone oxidoreductase that uses light energy to abstract electrons from H(2)O, generating O(2) and a proton gradient subsequently used for ATP formation. It consists of a core antenna complex that captures photons, and an electron transfer chain that converts photonic excitation into a charge separation. This subunit is found at the monomer-monomer interface and is required for correct PSII assembly and/or dimerization. This Synechococcus sp. (strain ATCC 27144 / PCC 6301 / SAUG 1402/1) (Anacystis nidulans) protein is Photosystem II reaction center protein L.